Reading from the N-terminus, the 370-residue chain is Aminomethyltransferase (370 aa).

It belongs to the GcvT family. In terms of assembly, the glycine cleavage system is composed of four proteins: P, T, L and H.

The catalysed reaction is N(6)-[(R)-S(8)-aminomethyldihydrolipoyl]-L-lysyl-[protein] + (6S)-5,6,7,8-tetrahydrofolate = N(6)-[(R)-dihydrolipoyl]-L-lysyl-[protein] + (6R)-5,10-methylene-5,6,7,8-tetrahydrofolate + NH4(+). Its function is as follows. The glycine cleavage system catalyzes the degradation of glycine. The sequence is that of Aminomethyltransferase from Prochlorococcus marinus (strain MIT 9515).